The primary structure comprises 58 residues: Keratin-associated protein 19-9b (58 aa).

Residues 6–52 (GNYYGGLGYGLGGFGGFGGLGYGYGSSYGLGGYGGYGYFSPSFYGGY) form a 12 X 2 AA repeats of G-[YCGS] region.

This sequence belongs to the KRTAP type 19 family. As to quaternary structure, interacts with hair keratins.

In the hair cortex, hair keratin intermediate filaments are embedded in an interfilamentous matrix, consisting of hair keratin-associated proteins (KRTAP), which are essential for the formation of a rigid and resistant hair shaft through their extensive disulfide bond cross-linking with abundant cysteine residues of hair keratins. The matrix proteins include the high-sulfur and high-glycine-tyrosine keratins. The sequence is that of Keratin-associated protein 19-9b (Krtap19-9b) from Mus musculus (Mouse).